Consider the following 262-residue polypeptide: Cytochrome c oxidase subunit 3 (262 aa).

6 consecutive transmembrane segments (helical) span residues 39–59 (YDIS…YQWW), 83–103 (GMIL…WAFF), 120–140 (MGII…ILLA), 163–183 (GLFF…YEYI), 198–218 (FFMA…FLLV), and 240–260 (AWYW…IYWW).

Belongs to the cytochrome c oxidase subunit 3 family. Component of the cytochrome c oxidase (complex IV, CIV), a multisubunit enzyme composed of a catalytic core of 3 subunits and several supernumerary subunits. The complex exists as a monomer or a dimer and forms supercomplexes (SCs) in the inner mitochondrial membrane with ubiquinol-cytochrome c oxidoreductase (cytochrome b-c1 complex, complex III, CIII).

The protein resides in the mitochondrion inner membrane. It carries out the reaction 4 Fe(II)-[cytochrome c] + O2 + 8 H(+)(in) = 4 Fe(III)-[cytochrome c] + 2 H2O + 4 H(+)(out). Component of the cytochrome c oxidase, the last enzyme in the mitochondrial electron transport chain which drives oxidative phosphorylation. The respiratory chain contains 3 multisubunit complexes succinate dehydrogenase (complex II, CII), ubiquinol-cytochrome c oxidoreductase (cytochrome b-c1 complex, complex III, CIII) and cytochrome c oxidase (complex IV, CIV), that cooperate to transfer electrons derived from NADH and succinate to molecular oxygen, creating an electrochemical gradient over the inner membrane that drives transmembrane transport and the ATP synthase. Cytochrome c oxidase is the component of the respiratory chain that catalyzes the reduction of oxygen to water. Electrons originating from reduced cytochrome c in the intermembrane space (IMS) are transferred via the dinuclear copper A center (CU(A)) of subunit 2 and heme A of subunit 1 to the active site in subunit 1, a binuclear center (BNC) formed by heme A3 and copper B (CU(B)). The BNC reduces molecular oxygen to 2 water molecules using 4 electrons from cytochrome c in the IMS and 4 protons from the mitochondrial matrix. The sequence is that of Cytochrome c oxidase subunit 3 (mt:CoIII) from Drosophila melanogaster (Fruit fly).